The following is an 888-amino-acid chain: Autophagy-related protein 9 (888 aa).

The interval Met-1 to Pro-170 is disordered. Residues Met-1–Asn-255 lie on the Cytoplasmic side of the membrane. Residues Ser-13 to Arg-24 are compositionally biased toward polar residues. Acidic residues predominate over residues Asp-28 to Glu-38. Residues Arg-123–Thr-143 are compositionally biased toward polar residues. A helical membrane pass occupies residues Phe-256–Ile-276. Over Arg-277 to Arg-422 the chain is Lumenal. The chain crosses the membrane as a helical span at residues Phe-423–Ile-443. The Cytoplasmic portion of the chain corresponds to Val-444 to Arg-511. Residues Thr-512 to Ser-532 lie within the membrane without spanning it. Over Glu-533–Arg-544 the chain is Cytoplasmic. The helical transmembrane segment at Pro-545–Ser-565 threads the bilayer. Residues Glu-566–Lys-611 are Lumenal-facing. The chain crosses the membrane as a helical span at residues Val-612–Ser-632. Residues Leu-633–Asp-642 lie on the Cytoplasmic side of the membrane. Residues Phe-643–Phe-663 lie within the membrane without spanning it. Residues Asp-664–Val-888 are Cytoplasmic-facing. Disordered regions lie at residues Gly-748–Gly-770 and Glu-834–Ala-866.

It belongs to the ATG9 family. Homotrimer; forms a homotrimer with a central pore that forms a path between the two membrane leaflets. Phosphorylated by ATG1. ATG1 phosphorylation is required for ATG18 interaction and preautophagosome elongation.

It is found in the preautophagosomal structure membrane. The protein localises to the cytoplasmic vesicle membrane. The protein resides in the golgi apparatus membrane. Its subcellular location is the endoplasmic reticulum membrane. The catalysed reaction is a 1,2-diacyl-sn-glycero-3-phosphocholine(in) = a 1,2-diacyl-sn-glycero-3-phosphocholine(out). The enzyme catalyses a 1,2-diacyl-sn-glycero-3-phospho-L-serine(in) = a 1,2-diacyl-sn-glycero-3-phospho-L-serine(out). It carries out the reaction a 1,2-diacyl-sn-glycero-3-phosphoethanolamine(in) = a 1,2-diacyl-sn-glycero-3-phosphoethanolamine(out). It catalyses the reaction a 1,2-diacyl-sn-glycero-3-phospho-(1D-myo-inositol-3-phosphate)(in) = a 1,2-diacyl-sn-glycero-3-phospho-(1D-myo-inositol-3-phosphate)(out). Functionally, phospholipid scramblase involved in autophagy and cytoplasm to vacuole transport (Cvt) vesicle formation. Cycles between the preautophagosomal structure/phagophore assembly site (PAS) and the cytoplasmic vesicle pool and supplies membrane for the growing autophagosome. Lipid scramblase activity plays a key role in preautophagosomal structure/phagophore assembly by distributing the phospholipids that arrive through ATG2 from the cytoplasmic to the luminal leaflet of the bilayer, thereby driving autophagosomal membrane expansion. Required for mitophagy. Also involved in endoplasmic reticulum-specific autophagic process and is essential for the survival of cells subjected to severe ER stress. Different machineries are required for anterograde trafficking to the PAS during either the Cvt pathway or bulk autophagy and for retrograde trafficking. Autophagy is required for proper vegetative growth, asexual/sexual reproduction, and full virulence. Autophagy is particularly involved in the biosynthesis of deoxynivalenol (DON), an important virulence determinant. Required for aerial hyphae development and lipid droplet degradation in response to starvation. This is Autophagy-related protein 9 from Gibberella zeae (strain ATCC MYA-4620 / CBS 123657 / FGSC 9075 / NRRL 31084 / PH-1) (Wheat head blight fungus).